We begin with the raw amino-acid sequence, 654 residues long: Macrolide export ATP-binding/permease protein MacB (654 aa).

The 239-residue stretch at 6 to 244 (IEISALNRIF…TSASSATDAA (239 aa)) folds into the ABC transporter domain. 42 to 49 (GTSGSGKS) contributes to the ATP binding site. A run of 4 helical transmembrane segments spans residues 279–299 (LLTM…VAIG), 534–554 (IAVI…LVSV), 584–604 (MVCL…GALF), and 617–637 (VTAI…FGFL).

This sequence belongs to the ABC transporter superfamily. Macrolide exporter (TC 3.A.1.122) family. As to quaternary structure, homodimer. Part of the tripartite efflux system MacAB-TolC, which is composed of an inner membrane transporter, MacB, a periplasmic membrane fusion protein, MacA, and an outer membrane component, TolC. The complex forms a large protein conduit and can translocate molecules across both the inner and outer membranes. Interacts with MacA.

It is found in the cell inner membrane. Its function is as follows. Part of the tripartite efflux system MacAB-TolC. MacB is a non-canonical ABC transporter that contains transmembrane domains (TMD), which form a pore in the inner membrane, and an ATP-binding domain (NBD), which is responsible for energy generation. Confers resistance against macrolides. The polypeptide is Macrolide export ATP-binding/permease protein MacB (Hahella chejuensis (strain KCTC 2396)).